We begin with the raw amino-acid sequence, 158 residues long: Dysbindin domain-containing protein 2 (158 aa).

The interval 79 to 158 is disordered; sequence FLPCEESSPA…DGGAEPGPCS (80 aa). The span at 106–131 shows a compositional bias: low complexity; it reads PTSDRTTSRTSSLSSDSSNLRSPNPS. Phosphoserine is present on residues Ser119 and Ser120. Thr137 is subject to Phosphothreonine. Ser142 bears the Phosphoserine mark. Acidic residues predominate over residues 142 to 151; the sequence is SDEEDGDDGG.

It belongs to the dysbindin family. In terms of assembly, monomer. Interacts with CSNK1D and CSNK1E.

Its function is as follows. May modulate the activity of casein kinase-1. Inhibits CSNK1D autophosphorylation (in vitro). The protein is Dysbindin domain-containing protein 2 (Dbndd2) of Mus musculus (Mouse).